The following is a 407-amino-acid chain: Arginine deiminase (407 aa).

Residue Cys-397 is the Amidino-cysteine intermediate of the active site.

Belongs to the arginine deiminase family.

The protein resides in the cytoplasm. It carries out the reaction L-arginine + H2O = L-citrulline + NH4(+). The protein operates within amino-acid degradation; L-arginine degradation via ADI pathway; carbamoyl phosphate from L-arginine: step 1/2. The chain is Arginine deiminase from Pediococcus pentosaceus (strain ATCC 25745 / CCUG 21536 / LMG 10740 / 183-1w).